Reading from the N-terminus, the 453-residue chain is Chromosomal replication initiator protein DnaA (453 aa).

The domain I, interacts with DnaA modulators stretch occupies residues 1-78 (MTENEQLFWN…FEIFNAEITA (78 aa)). Residues 78–112 (ANYVSNDLHLQETSFSNYQQSSNEVNTLPIRKIDS) are domain II. A domain III, AAA+ region region spans residues 113 to 331 (NLKEKYTFAN…GALKNISLVA (219 aa)). The ATP site is built by Gly-157, Gly-159, Lys-160, and Thr-161. Residues 332–453 (DFKHAKTITV…EIETIKNKIR (122 aa)) are domain IV, binds dsDNA.

This sequence belongs to the DnaA family. Oligomerizes as a right-handed, spiral filament on DNA at oriC.

It localises to the cytoplasm. In terms of biological role, plays an essential role in the initiation and regulation of chromosomal replication. ATP-DnaA binds to the origin of replication (oriC) to initiate formation of the DNA replication initiation complex once per cell cycle. Binds the DnaA box (a 9 base pair repeat at the origin) and separates the double-stranded (ds)DNA. Forms a right-handed helical filament on oriC DNA; dsDNA binds to the exterior of the filament while single-stranded (ss)DNA is stabiized in the filament's interior. The ATP-DnaA-oriC complex binds and stabilizes one strand of the AT-rich DNA unwinding element (DUE), permitting loading of DNA polymerase. After initiation quickly degrades to an ADP-DnaA complex that is not apt for DNA replication. Binds acidic phospholipids. The protein is Chromosomal replication initiator protein DnaA of Streptococcus agalactiae serotype Ia (strain ATCC 27591 / A909 / CDC SS700).